The following is a 236-amino-acid chain: 2-C-methyl-D-erythritol 4-phosphate cytidylyltransferase (236 aa).

This sequence belongs to the IspD/TarI cytidylyltransferase family. IspD subfamily.

It carries out the reaction 2-C-methyl-D-erythritol 4-phosphate + CTP + H(+) = 4-CDP-2-C-methyl-D-erythritol + diphosphate. It functions in the pathway isoprenoid biosynthesis; isopentenyl diphosphate biosynthesis via DXP pathway; isopentenyl diphosphate from 1-deoxy-D-xylulose 5-phosphate: step 2/6. In terms of biological role, catalyzes the formation of 4-diphosphocytidyl-2-C-methyl-D-erythritol from CTP and 2-C-methyl-D-erythritol 4-phosphate (MEP). This Alkaliphilus oremlandii (strain OhILAs) (Clostridium oremlandii (strain OhILAs)) protein is 2-C-methyl-D-erythritol 4-phosphate cytidylyltransferase.